The primary structure comprises 514 residues: M-phase inducer phosphatase 1 (514 aa).

Positions M73–F83 match the Phosphodegron motif. Phosphoserine; by CHEK1 is present on S75. Phosphoserine; by NEK11 occurs at positions 78, 81, and 87. Phosphoserine is present on S106. S123 carries the phosphoserine; by CHEK1 and CHEK2 modification. Positions K140–N142 match the KEN box motif. Position 172 is a phosphoserine; by CHEK1 (S172). Residues P256–L308 are disordered. Residues K266–R277 show a composition bias toward basic and acidic residues. Phosphoserine; by CHEK1 and CHEK2 occurs at positions 271 and 284. S311 is modified (phosphoserine). Residues L366 to E472 enclose the Rhodanese domain. The active site involves C421. Phosphothreonine; by CHEK1 is present on T497. Phosphoserine; by PLK3 occurs at positions 503 and 509.

The protein belongs to the MPI phosphatase family. Interacts with CCNB1/cyclin B1. Interacts with YWHAE/14-3-3 epsilon when phosphorylated. Interacts with CUL1 specifically when CUL1 is neddylated and active. Interacts with BTRC/BTRCP1 and FBXW11/BTRCP2. Interactions with CUL1, BTRC and FBXW11 are enhanced upon DNA damage. Interacts with CHEK2; mediates CDC25A phosphorylation and degradation in response to infrared-induced DNA damages. Interacts with HSP90AB1; prevents heat shock-mediated CDC25A degradation and contributes to cell cycle progression. Phosphorylated by CHEK1 on Ser-75, Ser-123, Ser-172, Ser-271, Ser-284 and Thr-497 during checkpoint mediated cell cycle arrest. Also phosphorylated by CHEK2 on Ser-123, Ser-271, and Ser-284 during checkpoint mediated cell cycle arrest. Phosphorylation on Ser-172 and Thr-497 creates binding sites for YWHAE/14-3-3 epsilon which inhibits CDC25A. Phosphorylation on Ser-75, Ser-123, Ser-172, Ser-271 and Ser-284 may also promote ubiquitin-dependent proteolysis of CDC25A by the SCF complex. Phosphorylation of CDC25A at Ser-75 by CHEK1 primes it for subsequent phosphorylation at Ser-75, Ser-81 and Ser-87 by NEK11. Phosphorylation by NEK11 is required for BTRC-mediated polyubiquitination and degradation. Phosphorylation by PIM1 leads to an increase in phosphatase activity. Phosphorylated by PLK3 following DNA damage, leading to promote its ubiquitination and degradation. In terms of processing, ubiquitinated by the anaphase promoting complex/cyclosome (APC/C) ubiquitin ligase complex that contains FZR1/CDH1 during G1 phase leading to its degradation by the proteasome. Ubiquitinated by a SCF complex containing BTRC and FBXW11 during S phase leading to its degradation by the proteasome. Deubiquitination by USP17L2/DUB3 leads to its stabilization. Ubiquitously expressed in most developing tissue. High levels in the testis and lower levels in the ovary, particularly in germ cells. Lower levels also in kidney, liver, heart and muscle.

It carries out the reaction O-phospho-L-tyrosyl-[protein] + H2O = L-tyrosyl-[protein] + phosphate. With respect to regulation, stimulated by B-type cyclins. Stimulated by PIM1-mediated phosphorylation. Functionally, tyrosine protein phosphatase which functions as a dosage-dependent inducer of mitotic progression. Directly dephosphorylates CDK1 and stimulates its kinase activity. Also dephosphorylates CDK2 in complex with cyclin-E, in vitro. The polypeptide is M-phase inducer phosphatase 1 (Cdc25a) (Mus musculus (Mouse)).